The primary structure comprises 161 residues: Trivalent organoarsenical cleaving enzyme (161 aa).

In terms of domain architecture, VOC spans 2–119; it reads KYAHVGLNVT…DGNEWEFFYT (118 aa). Fe(2+)-binding residues include H5 and H62. The roxarsone (III) site is built by C96 and C97. Residue E115 coordinates Fe(2+).

Fe(2+) is required as a cofactor.

The enzyme catalyses methylarsonous acid + AH2 + O2 = arsenite + methanol + A + H(+). The catalysed reaction is roxarsone (III) + AH2 + O2 = 4-hydroxy-3-nitrocyclohexa-2,5-dien-1-one + arsenite + A + H(+). It carries out the reaction nitarsone (III) + AH2 + O2 = 4-nitrocyclohexa-2,5-dien-1-one + arsenite + A + H(+). It catalyses the reaction 4-aminophenylarsonous acid + AH2 + O2 = 4-aminocyclohexa-2,5-dien-1-one + arsenite + A. With respect to regulation, inhibited in vitro by reagents that chemically modify histidine residues (diethylpyrocarbonate (DEPC)), aspartate or glutamate residues (1-ethyl-3-(3-(dimethylamino)propyl) carbodiimide (EDC)), or cysteine residues (N-ethylmaleimide (NEM) or iodoacetamide (IAA)). Its function is as follows. Nonheme iron-dependent dioxygenase that can break carbon-arsenic bonds, playing a role in the detoxification of environmental organoarsenical compounds. Catalyzes the oxygen-dependent demethylation of highly toxic methylarsonous acid (MAs(III)) to arsenite, which can then be exported out of the cell. Can also cleave the C-As bond in several trivalent aromatic arsenicals, including roxarsone (III), nitarsone (III) and (4-aminophenyl)arsonous acid. Organoarsenical degradation by this enzyme is proposed to have a significant impact on the arsenic biogeocycle that maintains a balance between organic and inorganic species. The chain is Trivalent organoarsenical cleaving enzyme from Bacillus sp. (strain MD1).